The chain runs to 85 residues: UPF0335 protein WP0746 (85 aa).

It belongs to the UPF0335 family.

The chain is UPF0335 protein WP0746 from Wolbachia pipientis subsp. Culex pipiens (strain wPip).